Consider the following 233-residue polypeptide: MNAIQKEKAVVLLSGGLDSATAMAIAKDMGFQVYALSFSYGQRHTTELEAAKRVAKTLGAVEHQVANIDLTCFGGSALTADLDVPKGRAPEDMEKEIPVTYVPARNTIFLSFALAWAEVLETSHIFIGVNAVDYSGYPDCRPEYIQAFTAMANLATKAGVEGRTKIEIHTPLIDLTKAQIIQKGIALGVDYGLTHSCYDPSPEGLACGQCDSCLLRKKGFAEAGIPDPTKYIP.

13 to 23 is an ATP binding site; that stretch reads LSGGLDSATAM. Zn(2+) is bound by residues Cys197, Cys207, Cys210, and Cys213.

This sequence belongs to the QueC family. Requires Zn(2+) as cofactor.

The enzyme catalyses 7-carboxy-7-deazaguanine + NH4(+) + ATP = 7-cyano-7-deazaguanine + ADP + phosphate + H2O + H(+). It functions in the pathway purine metabolism; 7-cyano-7-deazaguanine biosynthesis. Catalyzes the ATP-dependent conversion of 7-carboxy-7-deazaguanine (CDG) to 7-cyano-7-deazaguanine (preQ(0)). The protein is 7-cyano-7-deazaguanine synthase of Desulfatibacillum aliphaticivorans.